The sequence spans 485 residues: Pup--protein ligase (485 aa).

Glutamate 33 is a Mg(2+) binding site. Residue arginine 76 coordinates ATP. Position 78 (tyrosine 78) interacts with Mg(2+). Aspartate 80 functions as the Proton acceptor in the catalytic mechanism. Residue glutamate 86 participates in Mg(2+) binding. Residues threonine 89 and tryptophan 451 each coordinate ATP.

Belongs to the Pup ligase/Pup deamidase family. Pup-conjugating enzyme subfamily.

The catalysed reaction is ATP + [prokaryotic ubiquitin-like protein]-L-glutamate + [protein]-L-lysine = ADP + phosphate + N(6)-([prokaryotic ubiquitin-like protein]-gamma-L-glutamyl)-[protein]-L-lysine.. Its pathway is protein degradation; proteasomal Pup-dependent pathway. The protein operates within protein modification; protein pupylation. In terms of biological role, catalyzes the covalent attachment of the prokaryotic ubiquitin-like protein modifier Pup to the proteasomal substrate proteins, thereby targeting them for proteasomal degradation. This tagging system is termed pupylation. The ligation reaction involves the side-chain carboxylate of the C-terminal glutamate of Pup and the side-chain amino group of a substrate lysine. In Bifidobacterium longum subsp. infantis (strain ATCC 15697 / DSM 20088 / JCM 1222 / NCTC 11817 / S12), this protein is Pup--protein ligase.